The primary structure comprises 205 residues: Ribosomal RNA small subunit methyltransferase G (205 aa).

S-adenosyl-L-methionine contacts are provided by residues glycine 70, leucine 75, 124 to 125 (IE), and arginine 138.

Belongs to the methyltransferase superfamily. RNA methyltransferase RsmG family.

It is found in the cytoplasm. The catalysed reaction is guanosine(527) in 16S rRNA + S-adenosyl-L-methionine = N(7)-methylguanosine(527) in 16S rRNA + S-adenosyl-L-homocysteine. Specifically methylates the N7 position of guanine in position 527 of 16S rRNA. The polypeptide is Ribosomal RNA small subunit methyltransferase G (Ruegeria sp. (strain TM1040) (Silicibacter sp.)).